Here is a 597-residue protein sequence, read N- to C-terminus: Probable translation initiation factor IF-2 (597 aa).

The region spanning 4-221 (IRQPIIAVLG…LISGLAQKYL (218 aa)) is the tr-type G domain. Residues 13 to 20 (GHVDHGKT) are G1. 13–20 (GHVDHGKT) contributes to the GTP binding site. The tract at residues 38-42 (GITQH) is G2. The G3 stretch occupies residues 77–80 (DTPG). GTP-binding positions include 77 to 81 (DTPGH) and 131 to 134 (NKID). Residues 131–134 (NKID) form a G4 region. Positions 199–201 (SAK) are G5.

Belongs to the TRAFAC class translation factor GTPase superfamily. Classic translation factor GTPase family. IF-2 subfamily.

Its function is as follows. Function in general translation initiation by promoting the binding of the formylmethionine-tRNA to ribosomes. Seems to function along with eIF-2. This Thermococcus sibiricus (strain DSM 12597 / MM 739) protein is Probable translation initiation factor IF-2.